The following is a 111-amino-acid chain: ATP-dependent Clp protease adapter protein ClpS (111 aa).

Belongs to the ClpS family. Binds to the N-terminal domain of the chaperone ClpA.

In terms of biological role, involved in the modulation of the specificity of the ClpAP-mediated ATP-dependent protein degradation. The protein is ATP-dependent Clp protease adapter protein ClpS of Corynebacterium aurimucosum (strain ATCC 700975 / DSM 44827 / CIP 107346 / CN-1) (Corynebacterium nigricans).